The chain runs to 1017 residues: Fanconi-associated nuclease 1 (1017 aa).

Residues 1-10 are compositionally biased toward basic and acidic residues; the sequence is MMSEGKPPDK. Residues 1-23 form a disordered region; the sequence is MMSEGKPPDKKRPRRSLSISKNK. Residues 11 to 23 are compositionally biased toward basic residues; sequence KRPRRSLSISKNK. Residues 14 to 22 carry the D-box motif; sequence RRSLSISKN. A UBZ4-type zinc finger spans residues 41–69; sequence KLACPVCSKMVPRYDLNRHLDEMCANNDF. Residues Cys-44, Cys-47, His-59, and Cys-64 each coordinate Zn(2+). 2 disordered regions span residues 95–121 and 170–189; these read EDVT…KREV and IDKD…STVV. Residues 179-189 are compositionally biased toward polar residues; it reads SSPQSSKSTVV. The residue at position 180 (Ser-180) is a Phosphoserine. The KEN box motif lies at 212 to 214; it reads KEN. Residues 671–696 adopt a coiled-coil conformation; that stretch reads SRFVEILQRLHMYEEAVRELESLLSQ. The Mn(2+) site is built by Glu-834, Asp-960, Glu-975, and Val-976. In terms of domain architecture, VRR-NUC spans 895–1007; the sequence is EESLRAWVAA…GAEVEVCHVV (113 aa).

It belongs to the FAN1 family. Interacts with FANCD2 (when monoubiquitinated). Interacts with FANCI, MLH1, MLH3 and PMS2. It depends on Mn(2+) as a cofactor. The cofactor is Mg(2+). Post-translationally, ubiquitinated and degraded during mitotic exit by the APC/C-Cdh1 complex.

The protein resides in the nucleus. It catalyses the reaction Hydrolytically removes 5'-nucleotides successively from the 3'-hydroxy termini of 3'-hydroxy-terminated oligonucleotides.. Nuclease required for the repair of DNA interstrand cross-links (ICL) recruited at sites of DNA damage by monoubiquitinated FANCD2. Specifically involved in repair of ICL-induced DNA breaks by being required for efficient homologous recombination, probably in the resolution of homologous recombination intermediates. Not involved in DNA double-strand breaks resection. Acts as a 5'-3' exonuclease that anchors at a cut end of DNA and cleaves DNA successively at every third nucleotide, allowing to excise an ICL from one strand through flanking incisions. Probably keeps excising with 3'-flap annealing until it reaches and unhooks the ICL. Acts at sites that have a 5'-terminal phosphate anchor at a nick or a 1- or 2-nucleotide flap and is augmented by a 3' flap. Also has endonuclease activity toward 5'-flaps. The protein is Fanconi-associated nuclease 1 of Homo sapiens (Human).